The sequence spans 346 residues: MSHKINDQTLVNEQRLLAYDFFQNSNKVGLLSTLQYLDFVNFLVRSKKVNYLLVNKVSLPIYQKIYFDNFPFLGFDNNLWSAFGLALRNKSQNDTVFAFVEKTKNTDTEINKFLKILKTFKGLKIVFLLINSPEEKTTIKLSDSLIKEIKKQKIKHEVYSLRSFQNKFFKLVRKLEKKHKSKNNVMFVELNGVFGYETNFEKSNIDFSFTSFQDRFTIEKKLKITSHFILPHKYLLKNLENIKHPNFEQKNLIWQQTVKDFNQQFLLHYSKLQVFSNSPTKLKVDALIFDLEFHLIVEIMKGFNFDENCICLLEGNKEQNPNLPTVSLDTKVADIKTYQGCYFLNN.

This is an uncharacterized protein from Mycoplasma genitalium (strain ATCC 33530 / DSM 19775 / NCTC 10195 / G37) (Mycoplasmoides genitalium).